The chain runs to 428 residues: Histidinol dehydrogenase homolog (428 aa).

Gln-250 and His-253 together coordinate Zn(2+). Catalysis depends on proton acceptor residues Glu-320 and His-321. Asp-354 and His-413 together coordinate Zn(2+).

Belongs to the histidinol dehydrogenase family. Zn(2+) is required as a cofactor.

The chain is Histidinol dehydrogenase homolog from Pelagibacter ubique (strain HTCC1062).